Consider the following 942-residue polypeptide: Eukaryotic translation initiation factor 3 subunit A (942 aa).

Residues 320 to 494 (FKKYSSIILL…NTVTFFKDPF (175 aa)) enclose the PCI domain. Coiled coils occupy residues 499-529 (KAAG…GEEI), 588-669 (ITQT…KQRE), 705-734 (SKLS…AYRK), and 821-912 (IEEV…RKAQ). The disordered stretch occupies residues 502-546 (GTVEEEEEEEEEEGEEVEGEEAETGEEIVEEGEEHENEENKEPEP). Acidic residues predominate over residues 504-538 (VEEEEEEEEEEGEEVEGEEAETGEEIVEEGEEHEN). Basic and acidic residues-rich tracts occupy residues 836–870 (RKAE…ERKS) and 889–911 (RSAK…ERKA). The tract at residues 836–942 (RKAEIEAEER…KMKLRRASKK (107 aa)) is disordered.

The protein belongs to the eIF-3 subunit A family. As to quaternary structure, component of the eukaryotic translation initiation factor 3 (eIF-3) complex.

Its subcellular location is the cytoplasm. In terms of biological role, RNA-binding component of the eukaryotic translation initiation factor 3 (eIF-3) complex, which is involved in protein synthesis of a specialized repertoire of mRNAs and, together with other initiation factors, stimulates binding of mRNA and methionyl-tRNAi to the 40S ribosome. The eIF-3 complex specifically targets and initiates translation of a subset of mRNAs involved in cell proliferation. The protein is Eukaryotic translation initiation factor 3 subunit A of Vanderwaltozyma polyspora (strain ATCC 22028 / DSM 70294 / BCRC 21397 / CBS 2163 / NBRC 10782 / NRRL Y-8283 / UCD 57-17) (Kluyveromyces polysporus).